A 104-amino-acid polypeptide reads, in one-letter code: Large ribosomal subunit protein uL24 (104 aa).

Belongs to the universal ribosomal protein uL24 family. In terms of assembly, part of the 50S ribosomal subunit.

Functionally, one of two assembly initiator proteins, it binds directly to the 5'-end of the 23S rRNA, where it nucleates assembly of the 50S subunit. Its function is as follows. One of the proteins that surrounds the polypeptide exit tunnel on the outside of the subunit. The protein is Large ribosomal subunit protein uL24 of Clostridium perfringens (strain SM101 / Type A).